A 156-amino-acid chain; its full sequence is ATP synthase subunit b (156 aa).

A helical transmembrane segment spans residues 3-23 (ITLTIFAQALAFAGLIWIVAT).

It belongs to the ATPase B chain family. In terms of assembly, F-type ATPases have 2 components, F(1) - the catalytic core - and F(0) - the membrane proton channel. F(1) has five subunits: alpha(3), beta(3), gamma(1), delta(1), epsilon(1). F(0) has three main subunits: a(1), b(2) and c(10-14). The alpha and beta chains form an alternating ring which encloses part of the gamma chain. F(1) is attached to F(0) by a central stalk formed by the gamma and epsilon chains, while a peripheral stalk is formed by the delta and b chains.

It is found in the cell inner membrane. In terms of biological role, f(1)F(0) ATP synthase produces ATP from ADP in the presence of a proton or sodium gradient. F-type ATPases consist of two structural domains, F(1) containing the extramembraneous catalytic core and F(0) containing the membrane proton channel, linked together by a central stalk and a peripheral stalk. During catalysis, ATP synthesis in the catalytic domain of F(1) is coupled via a rotary mechanism of the central stalk subunits to proton translocation. Functionally, component of the F(0) channel, it forms part of the peripheral stalk, linking F(1) to F(0). This chain is ATP synthase subunit b, found in Xanthomonas campestris pv. campestris (strain 8004).